The sequence spans 617 residues: Hemagglutinin glycoprotein (617 aa).

The Intravirion segment spans residues 1–37 (MSPQRDRINAFYKDNPHPKGSRIVINREHLMIDRPYV). The tract at residues 1-154 (MSPQRDRINA…RIKLDYDQYC (154 aa)) is stalk. Residues 38-58 (LLAVLFVMFLSLIGLLAIAGI) traverse the membrane as a helical; Signal-anchor for type II membrane protein segment. Over 59 to 617 (RLHRAAIYTA…VTREDGTNRR (559 aa)) the chain is Virion surface. N-linked (GlcNAc...) asparagine; by host glycosylation is found at Asn-168, Asn-187, Asn-200, Asn-215, and Asn-238. Cystine bridges form between Cys-188–Cys-606, Cys-287–Cys-300, Cys-381–Cys-494, Cys-386–Cys-394, and Cys-570–Cys-579. Residues 458–543 (PMKNLALGVI…VEHAVVYYVY (86 aa)) are interaction with host NECTIN4 receptor.

It belongs to the paramyxoviruses hemagglutinin-neuraminidase family. Non-sialidase subfamily. Homodimer; disulfide-linked. Further forms homotetramer (dimer of dimers). Interacts (via C-terminus) with human NECTIN4 (via N-terminus); this interaction allows attachment to the respiratory epithelium and viral entry. Interacts (via C-terminus) with human SLAMF1/CD150 (via N-terminus); this interaction allows attachment and viral entry into the CD150-expressing immune cells. Interacts with human CD46 antigen.

It is found in the virion membrane. It localises to the host cell membrane. In terms of biological role, attaches the virus to the human SLAMF1/CD150 receptor for entry into host dendritic cells, macrophages, activated memory T cells and naive or memory B cells, thereby explaining the long immunosuppression that follows infection. In the respiratory airways, binds to the NECTIN4 receptor for entry into the host cell. Binding of H protein to the receptor induces a conformational change that allows the F protein to trigger virion/cell membranes fusion. The vaccine and laboratory-adapted strains use host CD46 as an alternate receptor. The high degree of interaction between H and CD46 results in down-regulation of the latter from the surface of infected cells, rendering them more sensitive to c3b-mediated complement lysis. This is Hemagglutinin glycoprotein (H) from Homo sapiens (Human).